We begin with the raw amino-acid sequence, 192 residues long: Peptidyl-tRNA hydrolase (192 aa).

Residue Tyr17 participates in tRNA binding. His22 (proton acceptor) is an active-site residue. 3 residues coordinate tRNA: Tyr68, Asn70, and Asn116.

This sequence belongs to the PTH family. As to quaternary structure, monomer.

It is found in the cytoplasm. It carries out the reaction an N-acyl-L-alpha-aminoacyl-tRNA + H2O = an N-acyl-L-amino acid + a tRNA + H(+). Functionally, hydrolyzes ribosome-free peptidyl-tRNAs (with 1 or more amino acids incorporated), which drop off the ribosome during protein synthesis, or as a result of ribosome stalling. Catalyzes the release of premature peptidyl moieties from peptidyl-tRNA molecules trapped in stalled 50S ribosomal subunits, and thus maintains levels of free tRNAs and 50S ribosomes. The chain is Peptidyl-tRNA hydrolase from Mycobacterium sp. (strain JLS).